A 189-amino-acid polypeptide reads, in one-letter code: Interferon alpha-6 (189 aa).

The first 23 residues, 1–23, serve as a signal peptide directing secretion; sequence MARLCAFLMVLAVLSYWPTCSLG. 2 disulfides stabilise this stretch: cysteine 24-cysteine 122 and cysteine 52-cysteine 162. An N-linked (GlcNAc...) asparagine glycan is attached at asparagine 101.

It belongs to the alpha/beta interferon family.

It is found in the secreted. Produced by macrophages, IFN-alpha have antiviral activities. Interferon stimulates the production of two enzymes: a protein kinase and an oligoadenylate synthetase. The chain is Interferon alpha-6 (Ifna6) from Mus musculus (Mouse).